Reading from the N-terminus, the 432-residue chain is D-amino acid dehydrogenase (432 aa).

Position 3–17 (Val-3–Trp-17) interacts with FAD.

Belongs to the DadA oxidoreductase family. The cofactor is FAD.

It carries out the reaction a D-alpha-amino acid + A + H2O = a 2-oxocarboxylate + AH2 + NH4(+). It functions in the pathway amino-acid degradation; D-alanine degradation; NH(3) and pyruvate from D-alanine: step 1/1. Its function is as follows. Oxidative deamination of D-amino acids. The sequence is that of D-amino acid dehydrogenase from Shigella sonnei (strain Ss046).